The chain runs to 204 residues: CASP-like protein 4B4 (204 aa).

At 1-60 (MSAAVAASSGAPAADVEKGAAAADANVDGGGAPAAAAASGEGVVSAVVRRWRRQDLLEKS) the chain is on the cytoplasmic side. The chain crosses the membrane as a helical span at residues 61–81 (GSALRVAAWAFSLLAFVVMGA). At 82–98 (NDHGDWRQFEHYEEYRY) the chain is on the extracellular side. Residues 99-119 (VVAIGVLAFIYTTLQLVRHGV) traverse the membrane as a helical segment. Over 120 to 130 (RLTGGQDLQGK) the chain is Cytoplasmic. A helical transmembrane segment spans residues 131 to 151 (VAVLVDFAGDQVTAYLLMSAV). Residues 152 to 175 (SAAIPITNRMREGADNVFTDSSAA) are Extracellular-facing. A helical membrane pass occupies residues 176–196 (SISMAFFAFLCLALSALVSGF). The Cytoplasmic portion of the chain corresponds to 197–204 (KLAKQTYI).

This sequence belongs to the Casparian strip membrane proteins (CASP) family. As to quaternary structure, homodimer and heterodimers.

It is found in the cell membrane. In Oryza sativa subsp. japonica (Rice), this protein is CASP-like protein 4B4.